Consider the following 100-residue polypeptide: Urease subunit gamma (100 aa).

It belongs to the urease gamma subunit family. In terms of assembly, heterotrimer of UreA (gamma), UreB (beta) and UreC (alpha) subunits. Three heterotrimers associate to form the active enzyme.

Its subcellular location is the cytoplasm. The catalysed reaction is urea + 2 H2O + H(+) = hydrogencarbonate + 2 NH4(+). Its pathway is nitrogen metabolism; urea degradation; CO(2) and NH(3) from urea (urease route): step 1/1. This chain is Urease subunit gamma, found in Haemophilus influenzae (strain PittGG).